The primary structure comprises 202 residues: Na(+)-translocating NADH-quinone reductase subunit E (202 aa).

A run of 6 helical transmembrane segments spans residues 11 to 31 (SVFI…FLAV), 35 to 55 (VTTA…SVPA), 79 to 99 (LSFL…QILE), 114 to 134 (GIFL…AFMV), 144 to 164 (LVFG…LAAV), and 180 to 200 (LGIT…FSGV).

Belongs to the NqrDE/RnfAE family. As to quaternary structure, composed of six subunits; NqrA, NqrB, NqrC, NqrD, NqrE and NqrF.

It localises to the cell inner membrane. The enzyme catalyses a ubiquinone + n Na(+)(in) + NADH + H(+) = a ubiquinol + n Na(+)(out) + NAD(+). Functionally, NQR complex catalyzes the reduction of ubiquinone-1 to ubiquinol by two successive reactions, coupled with the transport of Na(+) ions from the cytoplasm to the periplasm. NqrA to NqrE are probably involved in the second step, the conversion of ubisemiquinone to ubiquinol. This chain is Na(+)-translocating NADH-quinone reductase subunit E, found in Shewanella denitrificans (strain OS217 / ATCC BAA-1090 / DSM 15013).